The primary structure comprises 521 residues: GMP synthase [glutamine-hydrolyzing] (521 aa).

The Glutamine amidotransferase type-1 domain occupies 5–203 (KILILDFGSQ…VHEICGCGRD (199 aa)). Cys82 (nucleophile) is an active-site residue. Residues His177 and Glu179 contribute to the active site. A GMPS ATP-PPase domain is found at 204–396 (WNMPDYVNEA…LGLPHEMVYR (193 aa)). 231–237 (SGGVDSS) contacts ATP.

As to quaternary structure, homodimer.

It catalyses the reaction XMP + L-glutamine + ATP + H2O = GMP + L-glutamate + AMP + diphosphate + 2 H(+). Its pathway is purine metabolism; GMP biosynthesis; GMP from XMP (L-Gln route): step 1/1. Functionally, catalyzes the synthesis of GMP from XMP. The protein is GMP synthase [glutamine-hydrolyzing] of Aromatoleum aromaticum (strain DSM 19018 / LMG 30748 / EbN1) (Azoarcus sp. (strain EbN1)).